The primary structure comprises 287 residues: MSIVNLSSYQFATIEDTAAWRPFVTERCNALGLKGTVLLAPEGINLFVAGTRENTDAFIHYIRHDALFEGKFADLQFKESLSDKQPFTRMLVKLKREIITMKKPAIRPELGRAPFVDAPTLKSWLDRGHDDEGRPVVMLDTRNAFEVDVGTFDNALDYRITKFSEFPEVIEQNRADLEGKTIVSFCTGGIRCEKAAIHMKDVGIENVYQLEGGILKYFEEVGGAHYHGDCFVFDYRTALNPQLEPSKTTQCFGCRAVVTPEAQQSPLYVAGKTCPECHPDSKAARAA.

The Rhodanese domain maps to 132–226 (EGRPVVMLDT…YFEEVGGAHY (95 aa)). Catalysis depends on cysteine 186, which acts as the Cysteine persulfide intermediate.

This sequence belongs to the TrhO family.

It catalyses the reaction uridine(34) in tRNA + AH2 + O2 = 5-hydroxyuridine(34) in tRNA + A + H2O. Catalyzes oxygen-dependent 5-hydroxyuridine (ho5U) modification at position 34 in tRNAs. This chain is tRNA uridine(34) hydroxylase, found in Paraburkholderia xenovorans (strain LB400).